The chain runs to 499 residues: Probable cytosol aminopeptidase (499 aa).

Positions 263 and 268 each coordinate Mn(2+). The active site involves Lys275. Mn(2+) contacts are provided by Asp286, Asp345, and Glu347. Residue Arg349 is part of the active site.

The protein belongs to the peptidase M17 family. It depends on Mn(2+) as a cofactor.

It localises to the cytoplasm. The catalysed reaction is Release of an N-terminal amino acid, Xaa-|-Yaa-, in which Xaa is preferably Leu, but may be other amino acids including Pro although not Arg or Lys, and Yaa may be Pro. Amino acid amides and methyl esters are also readily hydrolyzed, but rates on arylamides are exceedingly low.. It carries out the reaction Release of an N-terminal amino acid, preferentially leucine, but not glutamic or aspartic acids.. Its function is as follows. Presumably involved in the processing and regular turnover of intracellular proteins. Catalyzes the removal of unsubstituted N-terminal amino acids from various peptides. The polypeptide is Probable cytosol aminopeptidase (Chlamydia trachomatis serovar A (strain ATCC VR-571B / DSM 19440 / HAR-13)).